The chain runs to 743 residues: Phosphoribosylformylglycinamidine synthase subunit PurL (743 aa).

His53 is a catalytic residue. The ATP site is built by Tyr56 and Lys95. Glu97 provides a ligand contact to Mg(2+). Substrate contacts are provided by residues 98–101 (SHNH) and Arg120. The Proton acceptor role is filled by His99. Asp121 contacts Mg(2+). Gln245 is a binding site for substrate. Asp275 provides a ligand contact to Mg(2+). A substrate-binding site is contributed by 319-321 (ESQ). Residues Asp502 and Gly539 each contribute to the ATP site. Residue Asn540 coordinates Mg(2+). Ser542 is a binding site for substrate.

The protein belongs to the FGAMS family. As to quaternary structure, monomer. Part of the FGAM synthase complex composed of 1 PurL, 1 PurQ and 2 PurS subunits.

Its subcellular location is the cytoplasm. It carries out the reaction N(2)-formyl-N(1)-(5-phospho-beta-D-ribosyl)glycinamide + L-glutamine + ATP + H2O = 2-formamido-N(1)-(5-O-phospho-beta-D-ribosyl)acetamidine + L-glutamate + ADP + phosphate + H(+). The protein operates within purine metabolism; IMP biosynthesis via de novo pathway; 5-amino-1-(5-phospho-D-ribosyl)imidazole from N(2)-formyl-N(1)-(5-phospho-D-ribosyl)glycinamide: step 1/2. Part of the phosphoribosylformylglycinamidine synthase complex involved in the purines biosynthetic pathway. Catalyzes the ATP-dependent conversion of formylglycinamide ribonucleotide (FGAR) and glutamine to yield formylglycinamidine ribonucleotide (FGAM) and glutamate. The FGAM synthase complex is composed of three subunits. PurQ produces an ammonia molecule by converting glutamine to glutamate. PurL transfers the ammonia molecule to FGAR to form FGAM in an ATP-dependent manner. PurS interacts with PurQ and PurL and is thought to assist in the transfer of the ammonia molecule from PurQ to PurL. This chain is Phosphoribosylformylglycinamidine synthase subunit PurL, found in Lactobacillus helveticus (strain DPC 4571).